A 183-amino-acid chain; its full sequence is Ribulose bisphosphate carboxylase small subunit, chloroplastic 1 (183 aa).

The transit peptide at 1–58 (MASSMLSNAAMATTAATAGAQASMVAPFNGLKSFATFPITKKSSNDFSSLPSNGGRVQ) directs the protein to the chloroplast.

It belongs to the RuBisCO small chain family. Heterohexadecamer of 8 large and 8 small subunits.

Its subcellular location is the plastid. The protein resides in the chloroplast. Its function is as follows. RuBisCO catalyzes two reactions: the carboxylation of D-ribulose 1,5-bisphosphate, the primary event in carbon dioxide fixation, as well as the oxidative fragmentation of the pentose substrate. Both reactions occur simultaneously and in competition at the same active site. Although the small subunit is not catalytic it is essential for maximal activity. The sequence is that of Ribulose bisphosphate carboxylase small subunit, chloroplastic 1 from Amaranthus hypochondriacus (Prince-of-Wales feather).